The chain runs to 196 residues: UPF0301 protein BF2109 (196 aa).

Belongs to the UPF0301 (AlgH) family.

The protein is UPF0301 protein BF2109 of Bacteroides fragilis (strain ATCC 25285 / DSM 2151 / CCUG 4856 / JCM 11019 / LMG 10263 / NCTC 9343 / Onslow / VPI 2553 / EN-2).